The following is a 789-amino-acid chain: Isoamylase SU1, chloroplastic (789 aa).

Residues 1–44 constitute a chloroplast transit peptide; that stretch reads MAQQLPCVSSPRPLLAVPAGRWRAGVRGRPNVAGLGRGRLSLHA. The Nucleophile role is filled by Asp417. Residue Glu473 is the Proton donor of the active site.

This sequence belongs to the glycosyl hydrolase 13 family.

Its subcellular location is the plastid. The protein localises to the chloroplast. The catalysed reaction is Hydrolysis of (1-&gt;6)-alpha-D-glucosidic branch linkages in glycogen, amylopectin and their beta-limit dextrins.. It functions in the pathway glycan biosynthesis; starch biosynthesis. In terms of biological role, isoamylase starch-debranching enzyme involved in amylopectin biosynthesis in endosperm. Functions by removing excess branches or improper branches that interfere with the formation of double helices of the cluster chains of amylopectin and crystallization of starch. This Zea mays (Maize) protein is Isoamylase SU1, chloroplastic.